The chain runs to 234 residues: Probable transcriptional regulatory protein Psyr_3028 (234 aa).

Belongs to the TACO1 family.

It localises to the cytoplasm. This is Probable transcriptional regulatory protein Psyr_3028 from Pseudomonas syringae pv. syringae (strain B728a).